We begin with the raw amino-acid sequence, 534 residues long: MGAGSSSYRPKAIYLDIDGRIQKVVFSKYCNSSDIMDLFCIATGLPRNTTISLLTTDDAMVSIDPTMPANSERTPYKVRPVAVKQVSEREELIQGVLAQVAEQFSRAFKINELKAEVANHLAVLEKRVELEGLKVVEIEKCKSDIKKMREELAARNSRTNCPCKYSFLDNKKLTPRRDVPTYPKYLLSPETIEALRKPTFDVWLWEPNEMLSCLEHMYHDLGLVRDFSINPITLRRWLLCVHDNYRNNPFHNFRHCFCVTQMMYSMVWLCGLQEKFSQMDILVLMTAAICHDLDHPGYNNTYQINARTELAVRYNDISPLENHHCAIAFQILARPECNIFASVPPEGFRQIRQGMITLILATDMARHAEIMDSFKEKMENFDYSNEEHLTLLKMILIKCCDISNEVRPMEVAEPWVDCLLEEYFMQSDREKSEGLPVAPFMDRDKVTKATAQIGFIKFVLIPMFETVTKLFPVVEETMLRPLWESREHYEELKQLDDAMKELQKKTESLTSGAPENTTEKNRDAKDSEGHSPPN.

The PDEase domain occupies 175–496 (PRRDVPTYPK…EHYEELKQLD (322 aa)). H251 serves as the catalytic Proton donor. 251–255 (HNFRH) lines the 3',5'-cyclic GMP pocket. H255, H291, and D292 together coordinate Zn(2+). Position 292 (D292) interacts with 3',5'-cyclic GMP. D292 contacts Mg(2+). At S318 the chain carries Phosphoserine. Residues D401, Y423, and 451–452 (AQ) each bind 3',5'-cyclic GMP. D401 lines the Zn(2+) pocket. Positions 500–534 (KELQKKTESLTSGAPENTTEKNRDAKDSEGHSPPN) are disordered. Over residues 517 to 534 (TTEKNRDAKDSEGHSPPN) the composition is skewed to basic and acidic residues.

This sequence belongs to the cyclic nucleotide phosphodiesterase family. PDE9 subfamily. In terms of assembly, homodimer. Requires Zn(2+) as cofactor. It depends on Mg(2+) as a cofactor. In terms of tissue distribution, highly expressed in kidney. Lower levels in liver, lung and brain. Widely expressed in brain, with highest expression in cerebellar Purkinje cells. Present in heart (at protein level).

The protein localises to the cell projection. The protein resides in the ruffle membrane. It is found in the cytoplasm. It localises to the perinuclear region. Its subcellular location is the golgi apparatus. The protein localises to the endoplasmic reticulum. The protein resides in the cell membrane. It is found in the sarcolemma. It catalyses the reaction 3',5'-cyclic GMP + H2O = GMP + H(+). It participates in purine metabolism; 3',5'-cyclic GMP degradation; GMP from 3',5'-cyclic GMP: step 1/1. Inhibited by SCH 51866 and moderately, by zaprinast. Specifically inhibited by PF-04447943 (6-[(3S,4S)-4-methyl-1-(pyrimidin-2-ylmethyl)pyrrolidin-3-yl]-1-(tetrahydro-2H-pyran-4-yl)-1,5-dihydro-4H-pyrazolo[3,4-d]pyrimidin-4-one). Specifically hydrolyzes the second messenger cGMP, which is a key regulator of many important physiological processes. Highly specific: compared to other members of the cyclic nucleotide phosphodiesterase family, has the highest affinity and selectivity for cGMP. Specifically regulates natriuretic-peptide-dependent cGMP signaling in heart, acting as a regulator of cardiac hypertrophy in myocytes and muscle. Does not regulate nitric oxide-dependent cGMP in heart. Additional experiments are required to confirm whether its ability to hydrolyze natriuretic-peptide-dependent cGMP is specific to heart or is a general feature of the protein. In brain, involved in cognitive function, such as learning and long-term memory. This is High affinity cGMP-specific 3',5'-cyclic phosphodiesterase 9A (Pde9a) from Mus musculus (Mouse).